A 204-amino-acid chain; its full sequence is Glycerol-3-phosphate acyltransferase (204 aa).

Transmembrane regions (helical) follow at residues Ile-8–Phe-28, Val-53–Ala-73, Phe-81–Gly-101, Phe-116–Ile-136, and Val-155–Leu-175.

It belongs to the PlsY family. In terms of assembly, probably interacts with PlsX.

The protein localises to the cell inner membrane. The enzyme catalyses an acyl phosphate + sn-glycerol 3-phosphate = a 1-acyl-sn-glycero-3-phosphate + phosphate. The protein operates within lipid metabolism; phospholipid metabolism. Functionally, catalyzes the transfer of an acyl group from acyl-phosphate (acyl-PO(4)) to glycerol-3-phosphate (G3P) to form lysophosphatidic acid (LPA). This enzyme utilizes acyl-phosphate as fatty acyl donor, but not acyl-CoA or acyl-ACP. This is Glycerol-3-phosphate acyltransferase from Francisella tularensis subsp. tularensis (strain FSC 198).